The sequence spans 106 residues: Vacuolar ATPase assembly integral membrane protein VMA21 homolog (106 aa).

The segment at 1-26 (MSNKNKKSGGAGNGAAQKQTRQQSHD) is disordered. Residues 1-32 (MSNKNKKSGGAGNGAAQKQTRQQSHDSQDYSS) are Cytoplasmic-facing. The helical transmembrane segment at 33-53 (FKIVLFYCMLIVFLPVVTFFL) threads the bilayer. Topologically, residues 54 to 69 (LKGFVLDRFFSLSEVK) are lumenal. A helical membrane pass occupies residues 70–90 (VNIASAVGAVVSLHIALGLYI). Over 91-106 (YRAYFGATGSKAVKED) the chain is Cytoplasmic.

This sequence belongs to the VMA21 family.

It localises to the endoplasmic reticulum membrane. It is found in the endoplasmic reticulum-Golgi intermediate compartment membrane. The protein resides in the cytoplasmic vesicle. The protein localises to the COPII-coated vesicle membrane. In terms of biological role, required for the assembly of the V0 complex of the vacuolar ATPase (V-ATPase) in the endoplasmic reticulum. This chain is Vacuolar ATPase assembly integral membrane protein VMA21 homolog, found in Drosophila ananassae (Fruit fly).